Consider the following 198-residue polypeptide: Peptidyl-tRNA hydrolase (198 aa).

Y14 serves as a coordination point for tRNA. The active-site Proton acceptor is H19. TRNA-binding residues include Y64, N66, and N112.

The protein belongs to the PTH family. Monomer.

The protein resides in the cytoplasm. The catalysed reaction is an N-acyl-L-alpha-aminoacyl-tRNA + H2O = an N-acyl-L-amino acid + a tRNA + H(+). In terms of biological role, hydrolyzes ribosome-free peptidyl-tRNAs (with 1 or more amino acids incorporated), which drop off the ribosome during protein synthesis, or as a result of ribosome stalling. Functionally, catalyzes the release of premature peptidyl moieties from peptidyl-tRNA molecules trapped in stalled 50S ribosomal subunits, and thus maintains levels of free tRNAs and 50S ribosomes. The chain is Peptidyl-tRNA hydrolase from Beijerinckia indica subsp. indica (strain ATCC 9039 / DSM 1715 / NCIMB 8712).